The following is a 678-amino-acid chain: DNA ligase (678 aa).

NAD(+) is bound by residues 47–51 (DSDYD), 96–97 (SL), and glutamate 122. Lysine 124 serves as the catalytic N6-AMP-lysine intermediate. NAD(+)-binding residues include arginine 145, glutamate 182, lysine 300, and lysine 324. Zn(2+) is bound by residues cysteine 418, cysteine 421, cysteine 436, and cysteine 442. The BRCT domain occupies 602–678 (AYNESFTGKT…ILEDNLKDLL (77 aa)).

This sequence belongs to the NAD-dependent DNA ligase family. LigA subfamily. It depends on Mg(2+) as a cofactor. Requires Mn(2+) as cofactor.

It catalyses the reaction NAD(+) + (deoxyribonucleotide)n-3'-hydroxyl + 5'-phospho-(deoxyribonucleotide)m = (deoxyribonucleotide)n+m + AMP + beta-nicotinamide D-nucleotide.. Its function is as follows. DNA ligase that catalyzes the formation of phosphodiester linkages between 5'-phosphoryl and 3'-hydroxyl groups in double-stranded DNA using NAD as a coenzyme and as the energy source for the reaction. It is essential for DNA replication and repair of damaged DNA. The polypeptide is DNA ligase (Francisella tularensis subsp. holarctica (strain OSU18)).